Reading from the N-terminus, the 366-residue chain is Growth hormone secretagogue receptor type 1 (366 aa).

Over 1-40 (MWNATPSEEPGSNLTRAELGWDAPPGNDSLADELLQLFPA) the chain is Extracellular. 2 N-linked (GlcNAc...) asparagine glycosylation sites follow: N13 and N27. Residues 41–66 (PLLAGVTATCVALFVVGIAGNLLTML) traverse the membrane as a helical segment. Over 67–72 (VVSRFR) the chain is Cytoplasmic. Residues 73-96 (ELRTTTNLYLSSMAFSDLLIFLCM) traverse the membrane as a helical segment. Over 97-117 (PLDLVRLWQYRPWNFGDLLCK) the chain is Extracellular. The cysteines at positions 116 and 198 are disulfide-linked. A helical transmembrane segment spans residues 118-139 (LFQFVSESCTYATVLTITALSV). Residues 140–162 (ERYFAICFPLRAKVVVTKGRVKL) are Cytoplasmic-facing. Residues 163 to 183 (VILVIWALAFCSAGPIFVLVG) form a helical membrane-spanning segment. Residues 184–211 (VEHENGTDPQDTNECRATEFAVRSGLLT) lie on the Extracellular side of the membrane. N188 is a glycosylation site (N-linked (GlcNAc...) asparagine). A helical transmembrane segment spans residues 212 to 235 (IMVWVSSVFFFLPVFCLTVLYSLI). Topologically, residues 236 to 263 (GRKLWRRKRGDGAVGSSLRDQNHRQTVK) are cytoplasmic. A helical membrane pass occupies residues 264–285 (MLAVVVFAFILCWLPFHVGRYL). The Extracellular portion of the chain corresponds to 286–302 (FSKSFEPGSLEIAQISQ). Residues 303-326 (YCNLVSFVLFYLSAAINPILYNIM) form a helical membrane-spanning segment. Residues 327–366 (SKKYRVAVFKLLGFEPFSQRKLSTLKDESSRAWTKSSINT) are Cytoplasmic-facing.

It belongs to the G-protein coupled receptor 1 family.

The protein resides in the cell membrane. Its function is as follows. Receptor for ghrelin, coupled to G-alpha-11 proteins. Stimulates growth hormone secretion. Also binds other growth hormone releasing peptides (GHRP) (e.g. Met-enkephalin and GHRP-6) as well as non-peptide, low molecular weight secretagogues (e.g. L-692,429, MK-0677, adenosine). The chain is Growth hormone secretagogue receptor type 1 (GHSR) from Oryctolagus cuniculus (Rabbit).